The following is an 867-amino-acid chain: Ent-copalyl diphosphate synthase 1, chloroplastic (867 aa).

Residues 1-35 constitute a chloroplast transit peptide; sequence MIHLHSPPTAPAAFGGAGSADWRRRRRWSWSSSSR. Residues 1–134 form a disordered region; the sequence is MIHLHSPPTA…ADEEADDELQ (134 aa). Residues 51–64 show a composition bias toward basic and acidic residues; it reads RGGDDGGGEDHHAD. A compositionally biased stretch (low complexity) spans 74 to 89; that stretch reads AWRARATTAGVSSSSS. A compositionally biased stretch (basic and acidic residues) spans 99–121; the sequence is IEHETPRITKWPNESRDLDDHQQ. Over residues 124–133 the composition is skewed to acidic residues; it reads EADEEADDEL. Lysine 286 lines the substrate pocket. The DXDD motif motif lies at 418–421; it reads EVDD. Lysine 504 is a substrate binding site.

It belongs to the terpene synthase family. Mg(2+) is required as a cofactor.

It localises to the plastid. Its subcellular location is the chloroplast. The enzyme catalyses (2E,6E,10E)-geranylgeranyl diphosphate = ent-copalyl diphosphate. The protein operates within plant hormone biosynthesis; gibberellin biosynthesis. Functionally, catalyzes the conversion of geranylgeranyl diphosphate to the gibberellin precursor ent-copalyl diphosphate. The chain is Ent-copalyl diphosphate synthase 1, chloroplastic (CPS1) from Oryza sativa subsp. japonica (Rice).